A 78-amino-acid polypeptide reads, in one-letter code: Cytochrome b-c1 complex subunit 10, mitochondrial (78 aa).

Over 1-26 the chain is Mitochondrial matrix; that stretch reads MVSYVKGPAYKALSHFGKLNAPLVRS. Residues 27–46 form a helical membrane-spanning segment; that stretch reads YIPNLVFWGAAAGGAVATFT. Residues 47-78 lie on the Mitochondrial intermembrane side of the membrane; sequence EGVPLFQKTFYEKIPFFGQHWIYNPDPEDVPV.

It belongs to the UQCR11/QCR10 family. As to quaternary structure, component of the ubiquinol-cytochrome c oxidoreductase (cytochrome b-c1 complex, complex III, CIII), a multisubunit enzyme composed of 10 subunits. The complex is composed of 3 respiratory subunits cytochrome b (COB), cytochrome c1 (CYT1) and Rieske protein (RIP1), 2 core protein subunits COR1 and QCR2, and 5 low-molecular weight protein subunits QCR6, QCR7, QCR8, QCR9 and QCR10. The complex exists as an obligatory dimer and forms supercomplexes (SCs) in the inner mitochondrial membrane with a monomer or a dimer of cytochrome c oxidase (complex IV, CIV), resulting in 2 different assemblies (supercomplexes III(2)IV and III(2)IV(2)).

It localises to the mitochondrion inner membrane. Its function is as follows. Component of the ubiquinol-cytochrome c oxidoreductase, a multisubunit transmembrane complex that is part of the mitochondrial electron transport chain which drives oxidative phosphorylation. The complex plays an important role in the uptake of multiple carbon sources present in different host niches. This Candida albicans (strain SC5314 / ATCC MYA-2876) (Yeast) protein is Cytochrome b-c1 complex subunit 10, mitochondrial.